The sequence spans 451 residues: ESX secretion system protein YukC (451 aa).

A helical membrane pass occupies residues 221 to 241; the sequence is IGLGLIVLLVPALIYSMYALF. Residues 362-447 adopt a coiled-coil conformation; it reads DEDIQKELDS…KKETEKKDEK (86 aa). Basic and acidic residues predominate over residues 376-386; the sequence is LEKAQKERQEN. The segment at 376–451 is disordered; it reads LEKAQKERQE…EKKDEKKDDK (76 aa). Polar residues predominate over residues 387-397; the sequence is KQSNSETSLVD. The span at 406–451 shows a compositional bias: basic and acidic residues; it reads DEEKQAEEKAAEEKAAAEEKAKKEEQKEKEDEKKETEKKDEKKDDK.

Belongs to the EssB family.

It localises to the cell membrane. In terms of biological role, required for YukE secretion. Probable component or regulator of the ESX/ESAT-6-like secretion system (BsEss). Required to deliver LXG toxins to target cells. The protein is ESX secretion system protein YukC (yukC) of Bacillus subtilis (strain 168).